Reading from the N-terminus, the 372-residue chain is Carbamoyl phosphate synthase small chain (372 aa).

A CPSase region spans residues 1–182 (MTLYCKRGYK…PKAPIVHLGN (182 aa)). L-glutamine-binding residues include Ser-53, Gly-234, and Gly-236. One can recognise a Glutamine amidotransferase type-1 domain in the interval 186 to 372 (TIVVVDCGVK…KFKKMVSRNA (187 aa)). Cys-262 (nucleophile) is an active-site residue. 5 residues coordinate L-glutamine: Leu-263, Gln-266, Asn-304, Gly-306, and Tyr-307. Active-site residues include His-347 and Glu-349.

Belongs to the CarA family. As to quaternary structure, composed of two chains; the small (or glutamine) chain promotes the hydrolysis of glutamine to ammonia, which is used by the large (or ammonia) chain to synthesize carbamoyl phosphate. Tetramer of heterodimers (alpha,beta)4.

It carries out the reaction hydrogencarbonate + L-glutamine + 2 ATP + H2O = carbamoyl phosphate + L-glutamate + 2 ADP + phosphate + 2 H(+). The catalysed reaction is L-glutamine + H2O = L-glutamate + NH4(+). It functions in the pathway amino-acid biosynthesis; L-arginine biosynthesis; carbamoyl phosphate from bicarbonate: step 1/1. It participates in pyrimidine metabolism; UMP biosynthesis via de novo pathway; (S)-dihydroorotate from bicarbonate: step 1/3. Its function is as follows. Small subunit of the glutamine-dependent carbamoyl phosphate synthetase (CPSase). CPSase catalyzes the formation of carbamoyl phosphate from the ammonia moiety of glutamine, carbonate, and phosphate donated by ATP, constituting the first step of 2 biosynthetic pathways, one leading to arginine and/or urea and the other to pyrimidine nucleotides. The small subunit (glutamine amidotransferase) binds and cleaves glutamine to supply the large subunit with the substrate ammonia. In Sulfurisphaera tokodaii (strain DSM 16993 / JCM 10545 / NBRC 100140 / 7) (Sulfolobus tokodaii), this protein is Carbamoyl phosphate synthase small chain.